Here is a 952-residue protein sequence, read N- to C-terminus: Protein translocase subunit SecA (952 aa).

ATP contacts are provided by residues Gln135, 153–157 (GEGKT), and Asp575. Positions 907–921 (AAPAAAIPGVSAKAA) are enriched in low complexity. The tract at residues 907-946 (AAPAAAIPGVSAKAATQSTTPAAKEIGRNDPCPCGSGKKY) is disordered. 4 residues coordinate Zn(2+): Cys938, Cys940, Cys949, and Cys950.

Belongs to the SecA family. As to quaternary structure, monomer and homodimer. Part of the essential Sec protein translocation apparatus which comprises SecA, SecYEG and auxiliary proteins SecDF. Other proteins may also be involved. Requires Zn(2+) as cofactor.

It is found in the cell membrane. The protein resides in the cytoplasm. It carries out the reaction ATP + H2O + cellular proteinSide 1 = ADP + phosphate + cellular proteinSide 2.. Its function is as follows. Part of the Sec protein translocase complex. Interacts with the SecYEG preprotein conducting channel. Has a central role in coupling the hydrolysis of ATP to the transfer of proteins into and across the cell membrane, serving as an ATP-driven molecular motor driving the stepwise translocation of polypeptide chains across the membrane. The sequence is that of Protein translocase subunit SecA from Dehalococcoides mccartyi (strain CBDB1).